Reading from the N-terminus, the 831-residue chain is Vi polysaccharide biosynthesis protein TviD (831 aa).

It participates in glycan metabolism; Vi-antigen biosynthesis. It functions in the pathway capsule biogenesis; capsule polysaccharide biosynthesis. Functionally, may be required for maturation of the Vi polysaccharide. The sequence is that of Vi polysaccharide biosynthesis protein TviD (tviD) from Salmonella typhi.